Reading from the N-terminus, the 432-residue chain is Glutamyl-tRNA reductase (432 aa).

Substrate contacts are provided by residues 49-52 (TCNR), Ser-107, 112-114 (ETQ), and Gln-118. Cys-50 serves as the catalytic Nucleophile. 186-191 (GAGEMG) contributes to the NADP(+) binding site.

Belongs to the glutamyl-tRNA reductase family. As to quaternary structure, homodimer.

The enzyme catalyses (S)-4-amino-5-oxopentanoate + tRNA(Glu) + NADP(+) = L-glutamyl-tRNA(Glu) + NADPH + H(+). The protein operates within porphyrin-containing compound metabolism; protoporphyrin-IX biosynthesis; 5-aminolevulinate from L-glutamyl-tRNA(Glu): step 1/2. Catalyzes the NADPH-dependent reduction of glutamyl-tRNA(Glu) to glutamate 1-semialdehyde (GSA). This Campylobacter jejuni subsp. doylei (strain ATCC BAA-1458 / RM4099 / 269.97) protein is Glutamyl-tRNA reductase.